The following is a 38-amino-acid chain: DNA binding protein VP8 (38 aa).

Residues Met-1–Lys-16 are compositionally biased toward basic residues. Residues Met-1 to Leu-38 are disordered.

The protein belongs to the microviridae J protein family.

It localises to the virion. It is found in the host cytoplasm. Its function is as follows. Mediates ssDNA packaging into virion, it locates to the internal surface of the capsid, thereby displacing the internal scaffolding protein VP3 during virion formation. Additionally, protein VP8 plays a role in viral attachment to the host cell. This chain is DNA binding protein VP8, found in Bdellovibrio phage phiMH2K (Bacteriophage phiMH2K).